The following is a 68-amino-acid chain: Non-specific lipid-transfer protein 2 (68 aa).

Belongs to the plant LTP family.

Plant non-specific lipid-transfer proteins transfer phospholipids as well as galactolipids across membranes. May play a role in wax or cutin deposition in the cell walls of expanding epidermal cells and certain secretory tissues. In Prunus armeniaca (Apricot), this protein is Non-specific lipid-transfer protein 2.